The primary structure comprises 464 residues: Protein FAM90A9 (464 aa).

3 disordered regions span residues 1–42 (MMAR…DPRL), 70–389 (PATL…HDGA), and 411–437 (APSF…SEAP). Basic and acidic residues-rich tracts occupy residues 74–89 (GKKE…KPRV) and 97–114 (NKDK…DPQR). Over residues 180-197 (LASLSPLRKASLSSSSSL) the composition is skewed to low complexity.

It belongs to the FAM90 family.

The polypeptide is Protein FAM90A9 (FAM90A9) (Homo sapiens (Human)).